A 154-amino-acid chain; its full sequence is Transcriptional repressor NrdR (154 aa).

A zinc finger lies at 3-34; the sequence is CPFCRHPDSRVVDSREADEGQAIRRRRSCPEC. The ATP-cone domain maps to 46 to 136; that stretch reads LAVVKRSGVT…VYRGFSSAED (91 aa).

Belongs to the NrdR family. It depends on Zn(2+) as a cofactor.

Functionally, negatively regulates transcription of bacterial ribonucleotide reductase nrd genes and operons by binding to NrdR-boxes. In Mycobacteroides abscessus (strain ATCC 19977 / DSM 44196 / CCUG 20993 / CIP 104536 / JCM 13569 / NCTC 13031 / TMC 1543 / L948) (Mycobacterium abscessus), this protein is Transcriptional repressor NrdR.